The primary structure comprises 522 residues: Golgin subfamily A member 6-like protein 10 (522 aa).

Residues 1-11 (MWPQPRLPPHP) show a composition bias toward pro residues. The disordered stretch occupies residues 1-77 (MWPQPRLPPH…DSATGIYGEG (77 aa)). Over residues 51–62 (NGSSPDTATSGG) the composition is skewed to polar residues. The stretch at 157–328 (SKVEQLQDET…RLCEQEKLPG (172 aa)) forms a coiled coil. A compositionally biased stretch (basic and acidic residues) spans 439-452 (KELEKSGGAEEPRG). Positions 439–503 (KELEKSGGAE…TGEAAGGAEE (65 aa)) are disordered. Low complexity-rich tracts occupy residues 456–471 (AAAA…PQGA) and 489–503 (GEAV…GAEE).

It belongs to the GOLGA6 family.

This Homo sapiens (Human) protein is Golgin subfamily A member 6-like protein 10.